The sequence spans 657 residues: Chemoreceptor McpA (657 aa).

The Cytoplasmic portion of the chain corresponds to 1 to 5 (MKRIR). Residues 6–29 (LVDLPLIIKIGFAPAFALLMLAVM) traverse the membrane as a helical segment. Residues 30-188 (AGGAILVQKS…ESESAKRQAQ (159 aa)) lie on the Periplasmic side of the membrane. The helical transmembrane segment at 189–212 (ATAAMSVTIIMSLLTLGAVGALAF) threads the bilayer. Residues 213 to 657 (LTVMTTRKSI…APASDGWEEF (445 aa)) lie on the Cytoplasmic side of the membrane. HAMP domains lie at 216-269 (MTTR…HLEQ) and 297-349 (QEAS…ETMK). A Methyl-accepting transducer domain is found at 354–583 (STDGLSTGAD…QSTAATHSLK (230 aa)). Gln378 is subject to Glutamate methyl ester (Gln). Glutamate methyl ester (Glu) occurs at positions 385 and 392. Gln574 carries the glutamate methyl ester (Gln) modification. The disordered stretch occupies residues 634–657 (ARPGRSSGSAALAQAPASDGWEEF).

It belongs to the methyl-accepting chemotaxis (MCP) protein family.

It localises to the cell membrane. In terms of biological role, chemotactic-signal transducers respond to changes in the concentration of attractants and repellents in the environment, transduce a signal from the outside to the inside of the cell, and facilitate sensory adaptation through the variation of the level of methylation. Attractants increase the level of methylation while repellents decrease the level of methylation. In Caulobacter vibrioides (strain ATCC 19089 / CIP 103742 / CB 15) (Caulobacter crescentus), this protein is Chemoreceptor McpA (mcpA).